The primary structure comprises 450 residues: Glutamyl-tRNA reductase (450 aa).

Substrate contacts are provided by residues 45–48 (TCNR), Ser-107, 112–114 (ERE), and Gln-118. Cys-46 (nucleophile) is an active-site residue. Residue 196-201 (GTGAYA) participates in NADP(+) binding.

The protein belongs to the glutamyl-tRNA reductase family. In terms of assembly, homodimer.

The catalysed reaction is (S)-4-amino-5-oxopentanoate + tRNA(Glu) + NADP(+) = L-glutamyl-tRNA(Glu) + NADPH + H(+). It functions in the pathway porphyrin-containing compound metabolism; protoporphyrin-IX biosynthesis; 5-aminolevulinate from L-glutamyl-tRNA(Glu): step 1/2. Catalyzes the NADPH-dependent reduction of glutamyl-tRNA(Glu) to glutamate 1-semialdehyde (GSA). This Micrococcus luteus (strain ATCC 4698 / DSM 20030 / JCM 1464 / CCM 169 / CCUG 5858 / IAM 1056 / NBRC 3333 / NCIMB 9278 / NCTC 2665 / VKM Ac-2230) (Micrococcus lysodeikticus) protein is Glutamyl-tRNA reductase.